We begin with the raw amino-acid sequence, 730 residues long: Dual function macrocyclase-peptidase POPB (730 aa).

Residues S577, D661, and H698 each act as charge relay system in the active site.

It belongs to the peptidase S9A family. As to quaternary structure, monomer. Expressed in the pileus (cap) and lamellae where it colocalizes with amanitin.

It carries out the reaction Hydrolysis of Pro-|-Xaa &gt;&gt; Ala-|-Xaa in oligopeptides.. Functionally, dual function macrocyclase-peptidase involved in the biosynthesis of the highly toxic amanitin toxin family of macrocycles. Cleaves peptide bonds on the C-terminal side of prolyl residues. The enzyme first removes 10 residues from the N-terminus of a 35-residue substrate. Conformational trapping of the 25 amino-acid peptide forces the enzyme to release this intermediate rather than proceed to macrocyclization. The enzyme rebinds the 25 amino-acid peptide in a different conformation and catalyzes macrocyclization of the N-terminal eight residues. The protein is Dual function macrocyclase-peptidase POPB of Amanita bisporigera (Destroying angel).